A 524-amino-acid polypeptide reads, in one-letter code: Lysine--tRNA ligase (524 aa).

The 'HIGH' region signature appears at 39–47 (ASGIPHMGS). Residues 294–298 (KISKS) carry the 'KMSKS' region motif. An ATP-binding site is contributed by K297.

The protein belongs to the class-I aminoacyl-tRNA synthetase family.

Its subcellular location is the cytoplasm. The enzyme catalyses tRNA(Lys) + L-lysine + ATP = L-lysyl-tRNA(Lys) + AMP + diphosphate. This is Lysine--tRNA ligase (lysS) from Cenarchaeum symbiosum.